We begin with the raw amino-acid sequence, 163 residues long: NADH-quinone oxidoreductase subunit I (163 aa).

2 consecutive 4Fe-4S ferredoxin-type domains span residues Leu53–Gly83 and Thr94–Glu123. Cys63, Cys66, Cys69, Cys73, Cys103, Cys106, Cys109, and Cys113 together coordinate [4Fe-4S] cluster.

Belongs to the complex I 23 kDa subunit family. In terms of assembly, NDH-1 is composed of 14 different subunits. Subunits NuoA, H, J, K, L, M, N constitute the membrane sector of the complex. It depends on [4Fe-4S] cluster as a cofactor.

It localises to the cell inner membrane. It catalyses the reaction a quinone + NADH + 5 H(+)(in) = a quinol + NAD(+) + 4 H(+)(out). Its function is as follows. NDH-1 shuttles electrons from NADH, via FMN and iron-sulfur (Fe-S) centers, to quinones in the respiratory chain. The immediate electron acceptor for the enzyme in this species is believed to be ubiquinone. Couples the redox reaction to proton translocation (for every two electrons transferred, four hydrogen ions are translocated across the cytoplasmic membrane), and thus conserves the redox energy in a proton gradient. The chain is NADH-quinone oxidoreductase subunit I from Coxiella burnetii (strain Dugway 5J108-111).